We begin with the raw amino-acid sequence, 125 residues long: Histone H2A (125 aa).

Residues 1-18 (MSGRGKGGKAKAKAKSRS) are compositionally biased toward basic residues. The interval 1 to 21 (MSGRGKGGKAKAKAKSRSSRA) is disordered. S2 bears the N-acetylserine mark. An N5-methylglutamine modification is found at Q104.

It belongs to the histone H2A family. In terms of assembly, the nucleosome is a histone octamer containing two molecules each of H2A, H2B, H3 and H4 assembled in one H3-H4 heterotetramer and two H2A-H2B heterodimers. The octamer wraps approximately 147 bp of DNA.

The protein localises to the nucleus. It localises to the chromosome. In terms of biological role, core component of nucleosome. Nucleosomes wrap and compact DNA into chromatin, limiting DNA accessibility to the cellular machineries which require DNA as a template. Histones thereby play a central role in transcription regulation, DNA repair, DNA replication and chromosomal stability. DNA accessibility is regulated via a complex set of post-translational modifications of histones, also called histone code, and nucleosome remodeling. The polypeptide is Histone H2A (Mytilus trossulus (Blue mussel)).